Consider the following 603-residue polypeptide: Vacuolar protein sorting-associated protein 33A (603 aa).

The protein belongs to the STXBP/unc-18/SEC1 family. As to quaternary structure, probable component of the homotypic fusion and vacuole protein sorting (HOPS) complex consisting of the core class C Vps proteins vps-11, vps-16, vps-18, and which further associates with vps-33.1, vps-39 and vps-41. Interacts with spe-39. In terms of tissue distribution, ubiquitously expressed at high levels in somatic tissues including the pharynx, muscles, hypodermis, neurons, coelomocytes and spermatheca. Expressed in the intestine.

It localises to the lysosome. It is found in the early endosome. The protein localises to the late endosome. The protein resides in the apical cell membrane. In terms of biological role, plays a role in vesicle-mediated protein trafficking to lysosomal compartments including the endocytic membrane transport pathways. Believed to act as a component of the putative HOPS endosomal tethering complex which is proposed to be involved in the rab-5-to-rab-7 endosome conversion probably implicating sand-1, and via binding SNAREs and SNARE complexes to mediate tethering and docking events during SNARE-mediated membrane fusion. The HOPS complex is proposed to be recruited to rab-7 on the late endosomal membrane and to regulate late endocytic, phagocytic and autophagic traffic towards lysosomes. Within the HOPS complex, contributes to the normal development of gut granules in embryonic and adult intestinal cells. Required for endosome/lysosome fusion. Required for early embryonic development. This Caenorhabditis elegans protein is Vacuolar protein sorting-associated protein 33A.